The chain runs to 3473 residues: MQSFLLSSKNQAKLLHAGLEFVGGVRCAHQGWVSGKAVVFCNYCNFAHRLYRFYTKNHCVLNKELLKISVEGLLCHCIEQAFLFRRFYDRRFAWQRKYAKGFLFDNLSIPFDDCALCPNAGTRLSQTGVSHDHFVCNYVEHLFECASFSRETGGKFFRACSEGWHWNATCTTCGASCRFANPRENIVIAIFMNFLRVMYDGNKYYVSLHCDTEWIPVHPLFARLVLMVRGFAPLDNSHVIEEDEMDICGHSSEVTYEDPSKFAFTHQHVTRGVGMGHLAFCRDANGVDRGEHKFYLHGPFDLKMTHAMFRVFMILLNCHGYVQSEFRDEFPDIKDRSLCGLLSVAGLRGVNVSCNEEFIHLHSQFHNGSFRSQRPIPMVYAEPEMYPPLGYVHLTESWVPRGRLLIDDLPSLMSRVYAESSQAQAGEIYEETFDEDDLFELDGEEGTSTRGLLDLGRRLGGLLLGATKCVKGLHSVIEWPVDVLTKEAEDLGTWLADNKKYVSESTWSCQVCPEVQDALEKSMREQAKLNAQMISGIKKLATTMDSATLKLRDNLKELEQRISVLEQGADDTQQVRITNLENFCEDAAKAFEALRNDIEALKKKPAQSVTPLPSPSGNSGTAGEQRPPPRRRRRPPVVEMSEAQAGETVIVGGDEEQEAHQDSSVAAAGPADEHNAMLQKIYLGSFKWKVSDGGGSILKTFSLPSDIWAANDRMKNFLSYFQYYTCEGMTFTLTITSIGLHGGTLLVAWDALSSATRRGIVSMIQLSNLPSMTLHASGSSIGTLTVTSPAIQHQICTSGSEGSLANLGSLVISVANVLCADSASAQELNVNAWVQFNKPKLSYWTAQHSIAQSGGFEESQDLGDLQAIIATGKWSTTSDKNLMEIIVHPTACYVSEKLIYQTNLSVVAHMFAKWSGSMRYTFVFGASMFDRGKIMVSAVPVQFRNSKLTLSQMAAFPSMVCDLSMETREFTFEVPYISIGKMSLVCKDYLFDISSYNADLVVSRLHVMILDPLVKTGNASNSIGFYVVAGPGKGFKLHQMCGVKSQFAHDVLTAQDFGRSLSCSRLLGNGFKEWCSRESLLMRVPLKSGKKRAFKYAVTPRMRTLPPEATSLSWLSQIFVEWRGSLTYTIHVQSGSAIQHSYMRIWYDPNGKTDEKEVKFLDSAHPPAGIKVYHWDLKIGDSFRFTVPYCARTEKLQIPKAYASTPYEWLTMYNGAVTFDLRSGADMELFVSIAGGDDFEMFEQTVPPKCGSVSDSYTVLSYADDVKSVTEVPNKTTYLADEQPTTSAPRTSIVNTEDDPPTEGEIARTTNGTLVQYRGGAWKPMVERTPTMSKKQVGPELTVSDPQMYKCIKNMNKNVKILTDRQCTAKLANIVDSAQELVGSNSTFVEDLAVGAKQIRKFGESLDVFEGSMSAAKTAELIDNTHAAFSGPADGSPISNVVQLLLPMLSSIKGMSGKMESKMASLTAMFQPCKKAITHLIERSFPYLACKGFKTDKWIWAALASILVGAALLHYYRSDLKFVKKWSVMCMIIWAPLLAEKAYHLGTWIKEKFLKSLPRTRTIKDSCRKHSLAGAFECLASASCAYIKDNWAKTMSSLLTILSVVASLVMWGKIPDDKEITSFADKFHSIGKKGRSITNIIGGFEKITSVCKKWSETLVSWIVSNVSGGIPKEDLAMTAYLGFKIHDWVRETRDMALMENRFRGFGGDEHLVKVRRLYGHSLKIDNALMEKQIVPDMQLSLIIKECRQKCLELMNESYTYKGMKQSRIDPLHVCMLGAPGVGKSTIAHVVINHLLDHRGEPEVDRIYTRSCADAYWSNYHQEPVILYDDLGAIKSNLRLSDYAEIMGIKTNDPFSVPMAAVEDKGKHCTSKYVFSCTNVLNLDDTGDVVTKMAYYRRRNVLVKVERDPDVPKNEANPTEGLVFTVLGHDQNCQGDPQFVVKENWDEPFLREVDTEGWRFERVEYRTFLRFLCMYTDAYMYSQEQVLQGIKTFKMNPFAPEPEFAQAQNGEAAECEIVEEMQEVPGEAPQEAKELVKIETAPNMDELVEAFNKLRVTPGHLNDILRDGSGCYIDEWAIAGPRWLSFHELLPFTCGCHHTRVCDFNIVYNNMCKAVRSQSVHFKYRANQAIKYAYTHKLHSQCRYSIDFEKLRECNPLDVFVCVLSKYTADDHSFERRCPKKMNVVRMQRPPVFELKMRPPSDSVVVEDEQGQRIFEWPHLYIFLRYRAIEFKDDKGSLTVREDAGADVCPWNEFLKLPWLDGDQLKSVLPAHLHRMVQARLEQVEIMEENGNYSGEMRNAIAEIKEYLDQDHQWVAALVLVACAVKERRRMTHDKLHRKSFNALDKLDAWYTTTAPKTSKKMKILLAIGASVAVAGVAVGAVILLQKTNLFGSKEDEEIEGEEGETQASGAHESDGIVTQHLKRDIRPKMRVTYTDHHVAEAHEEKDAEKPRKSGNPTRKSYLGLSPGFAERGMGVTYEEHTPLKDALLDESNKVFRRKIVASVESAVKQGGKASKDTVLSQIGDWQDKVKATGVIAARQLEASGSLKKIHNLNSRRTSSHVMPGLVVHDGAFERSDEVDAELHRITIDEVKSCPKMIKEGVSTLSVKKASVGMLALQKAESQLSFPFTSRAGVDRDLSMTNLIDTHMAGMSCIIISELGNVFRTFGVLRLCGTYVCMPAHYLDEITSEHTLYFVCPSKITQIQLERHRVCLVNGFQETVVWDLGPSVPPSRNYIDFIANADDWKNYKATSGALVMSKYSVDSMLQCVHFLDSIELTEANVSVPTSYYEANGGIHTIISGLRYRVHCMPGFCGRAIMRADATCFRKIIGMHVSGLRNKCMGYAETLTQEHLMQAIETLKETGLLKHIPKGAIGAGEEKLPEHSKKQSLSLEGKGNLGIVGQLTAQLVPTSVTKTTICKSMIHGLIGEIKTEPSVLSAWDRRLPFPPGEWDPMKDAVKKYGSYILPFPTEEIQEVENFLIKKFRRKENSRRTRNVNSLEVGINGIDGSDFWSPIEMKTSPGYPYILKRPSGAQGKKYLFEELEPYPSGRPKYAMKDPELIENYERIKEEVTSGVKPSIMTMECLKDERRKLAKIYEKPATRTFTILSPEVNILFRQYFGDFAAMVMSTRREHFSQVGINPESMEWSDLINSLLRVNTKGFAGDYSKFDGIGSPAIYHSIVNVVNAWYNDGEVNARARHSLISSIVHRDGICGDLILRYSQGMPSGFAMTVIFNSFVNYYFMALAWMSTVGSSLLSPQGSCKDFDTYCKIVAYGDDNVVSVHEEFLDVYNLQTVAAYLSHFGVTYTDGDKNPIHMSKPYEDITKMSFLKRGFERVESSGFLWKAPLDKTSIEERLNWIRDCPTPVEALEQNIESALHEAAIHGRDYFDDLVRRLNSALTRVMLPPTDISFEECQARWWASVTGALRAADYTSLVRRASSGHVEFNKKYRDMFRQQDLPLKEILMKSKPVALLDLEV.

Residues 514–604 (EVQDALEKSM…RNDIEALKKK (91 aa)) are a coiled coil. Disordered stretches follow at residues 602 to 644 (KKKP…SEAQ) and 1278 to 1306 (YLADEQPTTSAPRTSIVNTEDDPPTEGEI). Polar residues-rich tracts occupy residues 607-622 (QSVTPLPSPSGNSGTA) and 1278-1295 (YLADEQPTTSAPRTSIVN). Transmembrane regions (helical) follow at residues 1496-1516 (DKWIWAALASILVGAALLHYY) and 1595-1615 (MSSLLTILSVVASLVMWGKIP). In terms of domain architecture, SF3 helicase spans 1751 to 1917 (LELMNESYTY…PDVPKNEANP (167 aa)). 1777 to 1784 (GAPGVGKS) serves as a coordination point for ATP. The chain crosses the membrane as a helical span at residues 2363–2383 (ILLAIGASVAVAGVAVGAVIL). A compositionally biased stretch (acidic residues) spans 2394-2404 (EDEEIEGEEGE). 2 disordered regions span residues 2394 to 2415 (EDEEIEGEEGETQASGAHESDG) and 2438 to 2465 (VAEAHEEKDAEKPRKSGNPTRKSYLGLS). Basic and acidic residues predominate over residues 2438–2451 (VAEAHEEKDAEKPR). Residues 2632–2850 (GVDRDLSMTN…YAETLTQEHL (219 aa)) form the Peptidase C3 domain. Catalysis depends on for picornain 3C-like protease activity residues His-2680, Glu-2717, and Cys-2811. A RdRp catalytic domain is found at 3155-3286 (TKGFAGDYSK…SVHEEFLDVY (132 aa)).

Post-translationally, specific enzymatic cleavages by picornain 3C-like protease in vivo yield mature proteins. Picornain 3C-like protease is autocatalytically processed.

It is found in the virion. The protein resides in the host membrane. It catalyses the reaction RNA(n) + a ribonucleoside 5'-triphosphate = RNA(n+1) + diphosphate. Functionally, picornain 3C-like protease is a thiol protease that probably cleaves the polyprotein. This Oryza sativa (Rice) protein is Genome polyprotein.